The primary structure comprises 290 residues: Agroclavine dehydrogenase (290 aa).

This sequence belongs to the fgaFS/easG family. In terms of assembly, monomer.

It catalyses the reaction agroclavine + NADP(+) = didehydroagroclavine + NADPH + H(+). It functions in the pathway alkaloid biosynthesis; ergot alkaloid biosynthesis. Functionally, agroclavine dehydrogenase; part of the gene cluster that mediates the biosynthesis of fungal ergot alkaloid. DmaW catalyzes the first step of ergot alkaloid biosynthesis by condensing dimethylallyl diphosphate (DMAP) and tryptophan to form 4-dimethylallyl-L-tryptophan. The second step is catalyzed by the methyltransferase easF that methylates 4-dimethylallyl-L-tryptophan in the presence of S-adenosyl-L-methionine, resulting in the formation of 4-dimethylallyl-L-abrine. The catalase easC and the FAD-dependent oxidoreductase easE then transform 4-dimethylallyl-L-abrine to chanoclavine-I which is further oxidized by easD in the presence of NAD(+), resulting in the formation of chanoclavine-I aldehyde. Agroclavine dehydrogenase easG then mediates the conversion of chanoclavine-I aldehyde to agroclavine via a non-enzymatic adduct reaction: the substrate is an iminium intermediate that is formed spontaneously from chanoclavine-I aldehyde in the presence of glutathione. The presence of easA is not required to complete this reaction. Further conversion of agroclavine to paspalic acid is a two-step process involving oxidation of agroclavine to elymoclavine and of elymoclavine to paspalic acid, the second step being performed by the elymoclavine oxidase cloA. Paspalic acid is then further converted to D-lysergic acid. Ergopeptines are assembled from D-lysergic acid and three different amino acids by the D-lysergyl-peptide-synthetases composed each of a monomudular and a trimodular nonribosomal peptide synthetase subunit. LpsB and lpsC encode the monomodular subunits responsible for D-lysergic acid activation and incorporation into the ergopeptine backbone. LpsA1 and A2 subunits encode the trimodular nonribosomal peptide synthetase assembling the tripeptide portion of ergopeptines. LpsA1 is responsible for formation of the major ergopeptine, ergotamine, and lpsA2 for alpha-ergocryptine, the minor ergopeptine of the total alkaloid mixture elaborated by C.purpurea. D-lysergyl-tripeptides are assembled by the nonribosomal peptide synthetases and released as N-(D-lysergyl-aminoacyl)-lactams. Cyclolization of the D-lysergyl-tripeptides is performed by the Fe(2+)/2-ketoglutarate-dependent dioxygenase easH which introduces a hydroxyl group into N-(D-lysergyl-aminoacyl)-lactam at alpha-C of the aminoacyl residue followed by spontaneous condensation with the terminal lactam carbonyl group. The protein is Agroclavine dehydrogenase of Claviceps purpurea (Ergot fungus).